Here is a 635-residue protein sequence, read N- to C-terminus: Very-long-chain aldehyde decarbonylase GL1-6 (635 aa).

Helical transmembrane passes span 46 to 66 (LLNF…QLWI), 100 to 120 (IILT…AQVA), 127 to 147 (GMVV…YWLH), and 183 to 203 (VVYF…GTVS). Positions 139–273 (VEFLYYWLHR…MPVYDYIYGT (135 aa)) constitute a Fatty acid hydroxylase domain.

Belongs to the sterol desaturase family. As to quaternary structure, homodimer. As to expression, expressed in germinating seeds and shoots.

The protein localises to the endoplasmic reticulum membrane. The catalysed reaction is a long-chain fatty aldehyde + 2 NADPH + O2 + H(+) = a long-chain alkane + formate + 2 NADP(+) + H2O. Functionally, aldehyde decarbonylase involved in the conversion of aldehydes to alkanes. Core component of a very-long-chain alkane synthesis complex. This Oryza sativa subsp. japonica (Rice) protein is Very-long-chain aldehyde decarbonylase GL1-6.